Consider the following 244-residue polypeptide: Phosphoadenosine 5'-phosphosulfate reductase (244 aa).

Cys-239 (nucleophile; cysteine thiosulfonate intermediate) is an active-site residue.

It belongs to the PAPS reductase family. CysH subfamily.

The protein resides in the cytoplasm. The catalysed reaction is [thioredoxin]-disulfide + sulfite + adenosine 3',5'-bisphosphate + 2 H(+) = [thioredoxin]-dithiol + 3'-phosphoadenylyl sulfate. It functions in the pathway sulfur metabolism; hydrogen sulfide biosynthesis; sulfite from sulfate: step 3/3. Catalyzes the formation of sulfite from phosphoadenosine 5'-phosphosulfate (PAPS) using thioredoxin as an electron donor. The polypeptide is Phosphoadenosine 5'-phosphosulfate reductase (Salmonella newport (strain SL254)).